The chain runs to 441 residues: Alpha-monoglucosyldiacylglycerol synthase (441 aa).

This sequence belongs to the glycosyltransferase group 1 family. Glycosyltransferase 4 subfamily. Requires Mg(2+) as cofactor.

It localises to the cell membrane. The catalysed reaction is a 1,2-diacyl-sn-glycerol + UDP-alpha-D-glucose = a 1,2-diacyl-3-O-(alpha-D-glucopyranosyl)-sn-glycerol + UDP + H(+). Its activity is regulated as follows. Activated by the negatively charged lipid phosphatidylglycerol (PG). Glucosyltransferase involved in the biosynthesis of the non-bilayer-prone membrane lipid alpha-monoglucosyldiacylglycerol. This is a major component for maintaining a certain anionic lipid surface charge density, for balancing the bilayer to non-bilayer phase equilibria and for keeping a constant lipid bilayer spontaneous curvature (curvature packing stress). Catalyzes the transfer of a glucosyl residue from UDP-Glc to diacylglycerol (DAG) acceptor to form the corresponding alpha-glucosyl-DAG (1,2-diacyl-3-O-(alpha-D-glucopyranosyl)-sn-glycerol). It can only use UDP-Glc as sugar donor. The chain is Alpha-monoglucosyldiacylglycerol synthase from Streptococcus pneumoniae (strain ATCC BAA-255 / R6).